A 498-amino-acid chain; its full sequence is Lysine--tRNA ligase (498 aa).

Glu401 and Glu408 together coordinate Mg(2+).

It belongs to the class-II aminoacyl-tRNA synthetase family. Homodimer. It depends on Mg(2+) as a cofactor.

The protein localises to the cytoplasm. It carries out the reaction tRNA(Lys) + L-lysine + ATP = L-lysyl-tRNA(Lys) + AMP + diphosphate. The protein is Lysine--tRNA ligase of Dehalococcoides mccartyi (strain ATCC BAA-2266 / KCTC 15142 / 195) (Dehalococcoides ethenogenes (strain 195)).